The primary structure comprises 471 residues: Ribulose bisphosphate carboxylase large chain (471 aa).

K5 is modified (N6,N6,N6-trimethyllysine). Substrate is bound by residues N114 and T164. K166 (proton acceptor) is an active-site residue. Residue K168 participates in substrate binding. Mg(2+)-binding residues include K192, D194, and E195. K192 is subject to N6-carboxylysine. H285 functions as the Proton acceptor in the catalytic mechanism. Substrate contacts are provided by R286, H318, and S370.

Belongs to the RuBisCO large chain family. Type I subfamily. Heterohexadecamer of 8 large chains and 8 small chains; disulfide-linked. The disulfide link is formed within the large subunit homodimers. Mg(2+) is required as a cofactor. Post-translationally, the disulfide bond which can form in the large chain dimeric partners within the hexadecamer appears to be associated with oxidative stress and protein turnover.

The protein resides in the plastid. The protein localises to the chloroplast. The enzyme catalyses 2 (2R)-3-phosphoglycerate + 2 H(+) = D-ribulose 1,5-bisphosphate + CO2 + H2O. It carries out the reaction D-ribulose 1,5-bisphosphate + O2 = 2-phosphoglycolate + (2R)-3-phosphoglycerate + 2 H(+). In terms of biological role, ruBisCO catalyzes two reactions: the carboxylation of D-ribulose 1,5-bisphosphate, the primary event in carbon dioxide fixation, as well as the oxidative fragmentation of the pentose substrate in the photorespiration process. Both reactions occur simultaneously and in competition at the same active site. The sequence is that of Ribulose bisphosphate carboxylase large chain from Chiococca alba (West Indian milkberry).